A 116-amino-acid chain; its full sequence is Transcription elongation factor SPT4 homolog 1 (116 aa).

Residues 19-39 form a C4-type zinc finger; sequence CLRCRLVKTYDQFRDSGCENC.

Belongs to the SPT4 family.

Its subcellular location is the nucleus. In terms of biological role, may regulate transcription elongation by RNA polymerase II. May enhance transcriptional pausing at sites proximal to the promoter, which may in turn facilitate the assembly of an elongation competent RNA polymerase II complex. The chain is Transcription elongation factor SPT4 homolog 1 from Arabidopsis thaliana (Mouse-ear cress).